A 153-amino-acid polypeptide reads, in one-letter code: Glucose-6-phosphate 1-dehydrogenase (153 aa).

2 residues coordinate NADP(+): Arg-21 and Lys-120. D-glucose 6-phosphate is bound at residue Lys-120.

It belongs to the glucose-6-phosphate dehydrogenase family.

The protein resides in the cytoplasm. The protein localises to the cytosol. The catalysed reaction is D-glucose 6-phosphate + NADP(+) = 6-phospho-D-glucono-1,5-lactone + NADPH + H(+). It participates in carbohydrate degradation; pentose phosphate pathway; D-ribulose 5-phosphate from D-glucose 6-phosphate (oxidative stage): step 1/3. In terms of biological role, cytosolic glucose-6-phosphate dehydrogenase that catalyzes the first and rate-limiting step of the oxidative branch within the pentose phosphate pathway/shunt, an alternative route to glycolysis for the dissimilation of carbohydrates and a major source of reducing power and metabolic intermediates for fatty acid and nucleic acid biosynthetic processes. This chain is Glucose-6-phosphate 1-dehydrogenase (Zw), found in Drosophila simulans (Fruit fly).